Here is a 183-residue protein sequence, read N- to C-terminus: Adenylate kinase (183 aa).

Position 12 to 17 (12 to 17 (GAGKGT)) interacts with ATP. The interval 32–61 (STGDLLRSEVSAGSALGQEAEAVMNRGELV) is NMP. Residues T33, R38, 59 to 61 (ELV), 86 to 89 (GFPR), and Q93 contribute to the AMP site. The LID stretch occupies residues 127–133 (ARGRADD). R128 contacts ATP. R130 and R141 together coordinate AMP. G169 provides a ligand contact to ATP.

This sequence belongs to the adenylate kinase family. Monomer.

It localises to the cytoplasm. The catalysed reaction is AMP + ATP = 2 ADP. It functions in the pathway purine metabolism; AMP biosynthesis via salvage pathway; AMP from ADP: step 1/1. Catalyzes the reversible transfer of the terminal phosphate group between ATP and AMP. Plays an important role in cellular energy homeostasis and in adenine nucleotide metabolism. The sequence is that of Adenylate kinase from Synechococcus sp. (strain WH7803).